We begin with the raw amino-acid sequence, 543 residues long: Ipecac alkaloid beta-glucosidase 3 (543 aa).

A beta-D-glucoside contacts are provided by residues Q36, H140, 185 to 186, Y350, E422, W471, and F487; that span reads NE. E186 (proton donor) is an active-site residue. E422 (nucleophile) is an active-site residue.

The protein belongs to the glycosyl hydrolase 1 family.

Its subcellular location is the cytoplasm. The protein resides in the cytosol. The catalysed reaction is deacetylipecoside + H2O = deacetylipecoside aglycone + D-glucose. It catalyses the reaction deacetylisoipecoside + H2O = deacetylisoipecoside aglycone + D-glucose. It participates in alkaloid biosynthesis. In terms of biological role, beta-glucosidase catalyzing deglucosylation on N-deacetylisoipecoside and N-deacetylipecoside. In Carapichea ipecacuanha (Ipecac), this protein is Ipecac alkaloid beta-glucosidase 3.